The following is a 525-amino-acid chain: Vesicular inhibitory amino acid transporter (525 aa).

The Cytoplasmic segment spans residues 1–132; the sequence is MATLLRSKLT…WNVTNAIQGM (132 aa). A helical transmembrane segment spans residues 133–153; sequence FVLGLPYAILHGGYLGLFLII. Residues 154–204 are Lumenal, vesicle-facing; the sequence is FAAVVCCYTGKILIACLYEENEDGEVVRVRDSYVAIANACCAPRFPTLGGR. A 3'-nitrotyrosine modification is found at Y186. A helical transmembrane segment spans residues 205–225; sequence VVNVAQIIELVMTCILYVVVS. Topologically, residues 226-265 are cytoplasmic; sequence GNLMYNSFPGLPVSQKSWSIIATAVLLPCAFLKNLKAVSK. Residues 266-286 traverse the membrane as a helical segment; the sequence is FSLLCTLAHFVINILVIAYCL. Residues 287–305 are Lumenal, vesicle-facing; that stretch reads SRARDWAWEKVKFYIDVKK. The chain crosses the membrane as a helical span at residues 306–326; that stretch reads FPISIGIIVFSYTSQIFLPSL. The Cytoplasmic segment spans residues 327–341; that stretch reads EGNMQQPSEFHCMMN. The helical transmembrane segment at 342–362 threads the bilayer; it reads WTHIAACVLKGLFALVAYLTW. Topologically, residues 363–383 are lumenal, vesicle; the sequence is ADETKEVITDNLPGSIRAVVN. Residues 384–404 traverse the membrane as a helical segment; that stretch reads LFLVAKALLSYPLPFFAAVEV. The Cytoplasmic portion of the chain corresponds to 405-438; it reads LEKSLFQEGSRAFFPACYGGDGRLKSWGLTLRCA. The helical transmembrane segment at 439 to 459 threads the bilayer; the sequence is LVVFTLLMAIYVPHFALLMGL. Residues 460–461 lie on the Lumenal, vesicle side of the membrane; that stretch reads TG. Residues 462-482 form a helical membrane-spanning segment; sequence SLTGAGLCFLLPSLFHLRLLW. The Cytoplasmic segment spans residues 483–489; that stretch reads RKLLWHQ. Residues 490–510 traverse the membrane as a helical segment; sequence VFFDVAIFVIGGICSVSGFVH. Residues 511-525 are Lumenal, vesicle-facing; the sequence is SLEGLIEAYRTNAED.

This sequence belongs to the amino acid/polyamine transporter 2 family. Brain and retina. Localized in horizontal cell tips at both rod and cone terminals.

The protein localises to the cytoplasmic vesicle membrane. It localises to the presynapse. It carries out the reaction 4-aminobutanoate(out) + n H(+)(in) = 4-aminobutanoate(in) + n H(+)(out). The catalysed reaction is glycine(out) + n H(+)(in) = glycine(in) + n H(+)(out). It catalyses the reaction beta-alanine(out) + n H(+)(in) = beta-alanine(in) + n H(+)(out). With respect to regulation, chloride ions activate 4-aminobutanoate/H(+) transport. Functionally, antiporter that exchanges vesicular protons for cytosolic 4-aminobutanoate or to a lesser extend glycine, thus allowing their secretion from nerve terminals. The transport is equally dependent on the chemical and electrical components of the proton gradient. May also transport beta-alanine. Acidification of GABAergic synaptic vesicles is a prerequisite for 4-aminobutanoate uptake. This is Vesicular inhibitory amino acid transporter from Mus musculus (Mouse).